The primary structure comprises 2266 residues: MMPGETHSAAPGTAADLSRCQGCASLQQNLNEYVEALITLKQKIINTDNLLTEYQKKCDELQFARRENSNLHHQVEEMLQKISPLQKCQEELGSLKAELEEKKSSLKLYQDTHQEYARVKEECLKSDAQKKKLEAKVKKLQEAAVKQTQDFKQLRNEKKILEKEFKKTQERLDEFSKQKNEKELRHIGTQISSDSYGSIDKRKVKLLLKELWLCVNTTHRLPGEGSRCVPEKPAKAITSSRVPGEDGTLPPTQGSPLRTSNVQTCLTKLSMEIKEDFLCQNVEKQSSSGTNCSSDHVFNENGNLEVLVQSHRDGGSTEFVDHDHFFDEDLQAAIDFFKLPPPLLSPVPSPPPMSSPHPGSLPSSFAPETYFGEYTDSSDNDSVQLRNSAECVSEDDTTESQNYFGSLRKNKGSGTWEEKPKSHEAIQALNTWEVNKVTTSGLETFTATLRESSATHSLVGEKHWTTASRSMSDRKRDILHETKTQMEVREMDKSVQTEKTIHKLTRGLCIERLSASPAQEKEAAPGKSELCSSPLGKRPLNELMESEGKTVLSKMMGSPKSEFTKWTRINEITSEPDRITVSGHFHRLSRELEKEKEDTQGFTLGESPESEDDDSGDGMDVAGLDIETSFSSSSTLVALSVGSNPQSSSGLDCGNDTDITTKVFSTEPHHSEHKLQTKTLNTLHLQSEPPECSIGGNNLENSLCALSPELGASNFNDQKSSGIEYTKVVKGLTKIHSLPRSVFMKATKDGQCESQDPRIELTLNKPDFTSLIGSQAALIKSGLGFVKSTSWHHSDLLRKGGEESLRAKSEHEQKTSHQLQKAMPFLQNRGPTPKPDLLRENNNPVEFKTTASVLPNQVSVITKQTRPEKVQSAKLEHLRPHRVEPTLVTENSGNKTGMSTVAKCDGERDDTTQNITEVAAVKSISPEVSASRRKLDFNSPGGSSPVENSDCSTNSRLSFSPENILIQNQDIVREAAVQGDGQKQRQPQATDLDSSGTHGSEMLPATEVTVSGGFSVEETSCGDTGRSGGEALAVANDSTSTPQNANGLWKLKSTTPGGALPECFGTTDTTFSSAFCRKHGETQDTSQSSLPGTLHCYTGIREGGDDTEVESEAFSCSEGSEQQDAPDDSQKNLGDTDAAVAEVRPSLEVGYLTSALQDFNISTFSELDRLSTSEVVMFLESCQLGDYSSGDSVSECSSKGTLSKEMNKELKASEIGEKYRKQPCEEETLGTCEEWIESEEDDYSLKNTSQLTQCSLETLSEVLTKIRQELQTNSEDCNGKDTGSLLLLNVNNNMTTENLKEKSPFRETTGSSSHASEPTPQAAALDTEGSSPISGMPQNENPQSRPEARSDAGRQTDGGEEDLPEPVEPSALCSDSVMEPSIEQSSNCEAETTFQCQIATVTSEVINVLINKDQNLVIEKGDNWTIISGVAVLPHVDQVTLCDIPGDIPISQDQGELEAGCIPVTSAEKSPEASHTGPAFQEAPCGNNLSCPQEDVSSSGQSTNFDKSRLRNRPVKPSIWISSQIYDQNFETQIVASDHTYYNSKLEPSGKNKNRSKISNKDQSNKPVKTSASSRVETHQSEVAQSFSGEKANTKTQRSQTQTILANADTSTPTDCSPDTLSKIRQEVGPPLPPLLAPLIATPPRTSQPLSPLISSSSPSSPASPVGQVSPFRETPVPPAMSPWPEDPRRASPPDPSPSPSAASASERVVPSPLQFCAATPKHALPVPGRLPPCASGHAAVGGPQENSVKILDTMYPELSARARTLNILKGNIQLTRGPPADCKNLPGPASAMIGFKTITSAATAFVKTGSSSGGDCNQDKSRDLGTQQDSSGKRTLSTSTLRSAKRLRLDTGSPEPETRGVTAEGIHKNLPGNLPPAEVATTNEERSCSSPAVSAVSQLPLSPKETVESHDKAIANALKKIAEFSFDLLPVIRSHVYVGNISKKPVMRDQEKEVVYEFSTTKKHLAECLLHSILSELKIQKISMDHNYIHALCRVYVGICRQLGDLERARLFCYSLLKEDFPESEKLTLFIANMWHDIFLSQSVINKAMQLVARQRAKGEVLNCLRAFLNWEKNAPVDVGFMVSKLLLTIQLCPKTEFQPSEKFGEDLSDNTWEYIFAIDLLCCHQKWIWTHDNIISKELWPVMDKWIKYRKGHANIAYTPDIIIASILRLIGRLGQLGLKEGFPSAVKNISSVIGMFIQHAHDEDIPWGIQLAAVYALCDLSPSNPAEISKILEAWRREASKSVPSAIVSCLEEVSALSTEELG.

Residues 23-186 (CASLQQNLNE…KQKNEKELRH (164 aa)) are a coiled coil. Disordered stretches follow at residues 223 to 259 (GEGS…PLRT) and 517 to 540 (PAQE…KRPL). Positions 250 to 259 (PPTQGSPLRT) are enriched in polar residues. Residues S255, S533, S558, and S589 each carry the phosphoserine modification. The disordered stretch occupies residues 591–623 (ELEKEKEDTQGFTLGESPESEDDDSGDGMDVAG). The segment covering 608-617 (PESEDDDSGD) has biased composition (acidic residues). A Phosphoserine modification is found at S707. Position 832 is a phosphothreonine (T832). A Phosphoserine modification is found at S925. A disordered region spans residues 925–955 (SPEVSASRRKLDFNSPGGSSPVENSDCSTNS). A compositionally biased stretch (polar residues) spans 940–955 (PGGSSPVENSDCSTNS). S958 is modified (phosphoserine). Disordered regions lie at residues 977-1001 (VQGD…HGSE) and 1107-1133 (TEVE…QKNL). Residues 984–998 (QRQPQATDLDSSGTH) are compositionally biased toward polar residues. K1218 carries the N6-acetyllysine modification. Disordered regions lie at residues 1295-1372 (TTEN…PSAL), 1467-1510 (AEKS…KSRL), and 1543-1707 (NSKL…SASE). Composition is skewed to polar residues over residues 1306–1319 (RETT…SEPT), 1328–1344 (EGSS…NPQS), 1487–1505 (NNLS…STNF), 1565–1588 (NKPV…QSFS), and 1594–1605 (TKTQRSQTQTIL). S1588 is modified (phosphoserine). Composition is skewed to low complexity over residues 1609-1620 (DTSTPTDCSPDT) and 1637-1671 (APLI…QVSP). S1617 is subject to Phosphoserine. T1642 bears the Phosphothreonine mark. Residues S1692, S1697, S1699, S1701, S1712, S1838, and S1854 each carry the phosphoserine modification. The interval 1809–1902 (TGSSSGGDCN…AVSAVSQLPL (94 aa)) is disordered. Over residues 1825 to 1843 (LGTQQDSSGKRTLSTSTLR) the composition is skewed to polar residues. Over residues 1889 to 1901 (CSSPAVSAVSQLP) the composition is skewed to polar residues. Residue S1903 is modified to Phosphoserine.

Belongs to the ICE1 family. Component of the little elongation complex (LEC), at least composed of ELL (ELL, ELL2 or ELL3), ZC3H8, ICE1 and ICE2. Interacts (via N-terminus domain) with ELL. Interacts (via C-terminus domain) with ICE2 and ZC3H8.

It is found in the nucleus. The protein resides in the cajal body. Its function is as follows. Component of the little elongation complex (LEC), a complex required to regulate small nuclear RNA (snRNA) gene transcription by RNA polymerase II and III. Specifically acts as a scaffold protein that promotes the LEC complex formation and recruitment and RNA polymerase II occupancy at snRNA genes in subnuclear bodies. This Homo sapiens (Human) protein is Little elongation complex subunit 1 (ICE1).